Consider the following 95-residue polypeptide: Late cornified envelope protein 7A (95 aa).

This sequence belongs to the LCE family.

Functionally, precursors of the cornified envelope of the stratum corneum. The chain is Late cornified envelope protein 7A from Homo sapiens (Human).